We begin with the raw amino-acid sequence, 127 residues long: uncharacterized protein (127 aa).

At T30 the chain carries Phosphothreonine. Residues 51-75 (APTYEQVLYPPASQKKTSNSTSEES) form a disordered region. A Phosphoserine modification is found at S63.

This is an uncharacterized protein from Mus musculus (Mouse).